The sequence spans 462 residues: Elongation factor 1-alpha (462 aa).

Glycine 2 is subject to N,N,N-trimethylglycine. N6,N6-dimethyllysine; alternate is present on lysine 3. The residue at position 3 (lysine 3) is an N6-methyllysine; alternate. A tr-type G domain is found at 5–242; that stretch reads KAHVNVVVIG…DAIEPPVRPS (238 aa). The segment at 14–21 is G1; the sequence is GHVDSGKS. 14–21 contributes to the GTP binding site; it reads GHVDSGKS. The residue at position 30 (lysine 30) is an N6-methyllysine. Positions 70–74 are G2; sequence GITID. Lysine 79 is modified (N6,N6,N6-trimethyllysine). Positions 91–94 are G3; sequence DAPG. GTP is bound by residues 91–95 and 153–156; these read DAPGH and NKMD. The segment at 153–156 is G4; that stretch reads NKMD. The interval 192-194 is G5; the sequence is SGW. Position 318 is an N6,N6-dimethyllysine; alternate (lysine 318). Lysine 318 carries the N6-methyllysine; alternate modification. The residue at position 392 (lysine 392) is an N6-methyllysine.

This sequence belongs to the TRAFAC class translation factor GTPase superfamily. Classic translation factor GTPase family. EF-Tu/EF-1A subfamily.

Its subcellular location is the cytoplasm. In terms of biological role, this protein promotes the GTP-dependent binding of aminoacyl-tRNA to the A-site of ribosomes during protein biosynthesis. The protein is Elongation factor 1-alpha (TEF1) of Serendipita indica (Root endophyte fungus).